The following is a 303-amino-acid chain: UDP-N-acetylenolpyruvoylglucosamine reductase (303 aa).

Residues 30–195 enclose the FAD-binding PCMH-type domain; sequence KTGGPADLLA…LSARFEMAKG (166 aa). The active site involves Arg-174. The active-site Proton donor is the Ser-224. Glu-294 is an active-site residue.

It belongs to the MurB family. FAD is required as a cofactor.

It localises to the cytoplasm. The catalysed reaction is UDP-N-acetyl-alpha-D-muramate + NADP(+) = UDP-N-acetyl-3-O-(1-carboxyvinyl)-alpha-D-glucosamine + NADPH + H(+). It functions in the pathway cell wall biogenesis; peptidoglycan biosynthesis. Functionally, cell wall formation. The chain is UDP-N-acetylenolpyruvoylglucosamine reductase from Latilactobacillus sakei subsp. sakei (strain 23K) (Lactobacillus sakei subsp. sakei).